Reading from the N-terminus, the 270-residue chain is Multi-heme protein MamP (270 aa).

Topologically, residues 1–6 (MNSKLV) are cytoplasmic. A membrane pass occupies residues 7–20 (LLVVGVVFALVLVI). Topologically, residues 21–270 (GRQGGVVAPQ…GPCEACHVIN (250 aa)) are lumenal. Residues 84–201 (NLKVFEGHWQ…GGLGFAQLEG (118 aa)) are PDZ. Residues 205–225 (ILPGDPRPHGYRGACTDCHPV) carry the MCR (magnetochrome) 1 motif. Heme contacts are provided by C219, C222, H223, C263, C266, and H267. An MCR 2 motif is present at residues 245–269 (ITRDAVTRGVSPHEVRGPCEACHVI).

The protein belongs to the magnetosome MamP family. Homodimer. Requires heme as cofactor. In terms of processing, subject to proteolytic cleavage which requires both MamE and MamO.

It is found in the cell inner membrane. Its function is as follows. Involved in redox-control of magnetite formation. Oxidizes Fe(2+) at alkaline pH; successively forms ferrihydrite (Fe(3+)(2)O(3) 0.5 H(2)O) then magnetite (Fe(3)O(4)) from an Fe(2+) solution. The chain is Multi-heme protein MamP from Magnetospirillum gryphiswaldense (strain DSM 6361 / JCM 21280 / NBRC 15271 / MSR-1).